The chain runs to 212 residues: Anaphase-promoting complex subunit 10 (212 aa).

Positions 12 to 196 constitute a DOC domain; the sequence is MDEEERTSSR…PSAVLEARPG (185 aa).

Belongs to the APC10 family. The APC/C complex is probably composed of at least 12 subunits: apc-2, apc-10, apc-11, cdc-26, emb-1, emb-27, emb-30, mat-1, mat-2, mat-3, such-1 and gfi-3.

Its pathway is protein modification; protein ubiquitination. Functionally, probable component of the anaphase promoting complex/cyclosome (APC/C), a cell cycle-regulated E3 ubiquitin ligase that controls progression through mitosis and the G1 phase of the cell cycle. The APC/C complex acts by mediating ubiquitination and subsequent degradation of target proteins. This is Anaphase-promoting complex subunit 10 from Caenorhabditis elegans.